The chain runs to 40 residues: uncharacterized protein (40 aa).

This is an uncharacterized protein from Dictyostelium discoideum (Social amoeba).